The primary structure comprises 232 residues: Large ribosomal subunit protein uL1 (232 aa).

The protein belongs to the universal ribosomal protein uL1 family. As to quaternary structure, part of the 50S ribosomal subunit.

In terms of biological role, binds directly to 23S rRNA. The L1 stalk is quite mobile in the ribosome, and is involved in E site tRNA release. Functionally, protein L1 is also a translational repressor protein, it controls the translation of the L11 operon by binding to its mRNA. In Xanthomonas campestris pv. campestris (strain B100), this protein is Large ribosomal subunit protein uL1.